A 795-amino-acid polypeptide reads, in one-letter code: ATP-dependent RNA helicase DHX15 (795 aa).

The segment at 1 to 108 (MSKRHRLDLG…HSTHAGHAGH (108 aa)) is disordered. Phosphoserine is present on serine 15. The span at 20 to 62 (AGTDGKDRDRDRDREDRSKDRDRERDRGDREREREKEKEKELR) shows a compositional bias: basic and acidic residues. The segment covering 79–108 (ASHSAHSTHSAHSTHSTHSAHSTHAGHAGH) has biased composition (low complexity). The Helicase ATP-binding domain maps to 147–313 (TDILVRHQSF…FDNCPLLTIP (167 aa)). Residue 160-167 (GETGSGKT) coordinates ATP. The DEAH box motif lies at 260–263 (DEAH). A Helicase C-terminal domain is found at 338–518 (TVIQIHMCEE…SVVLQLKKLG (181 aa)). Lysine 488 bears the N6-acetyllysine mark. Residue lysine 786 forms a Glycyl lysine isopeptide (Lys-Gly) (interchain with G-Cter in SUMO2) linkage.

It belongs to the DEAD box helicase family. DEAH subfamily. DDX15/PRP43 sub-subfamily. In terms of assembly, component of the U11/U12 snRNPs that are part of the U12-type spliceosome. Identified in the Intron Large spliceosome complex (IL, also named intron lariat spliceosome), a post-mRNA release spliceosomal complex containing the excised intron, U2, U5 and U6 snRNPs, and splicing factors; the association may be transient. The IL complex exists in two distinct conformations, one with the DHX15 (ILS2) and one without (ILS1). Interacts with TFIP11 (via G-patch domain); indicative for a recruitment to the IL complex. Interacts with SSB/La. Interacts with GPATCH2 (via G-patch domain); promoting the RNA helicase activity. Interacts with NKRF (via G-patch domain); promoting the RNA helicase activity. Interacts with NLRP6. In terms of tissue distribution, ubiquitous.

It is found in the nucleus. Its subcellular location is the nucleolus. The catalysed reaction is ATP + H2O = ADP + phosphate + H(+). With respect to regulation, ATPase activity is enhanced upon binding to G-patch domain-containing proteins. G-patch domain-containing proteins act like a brace that tethers mobile sections of DHX15 together, stabilizing a functional conformation with high RNA affinity, thereby promoting the ATPase activity. Functionally, RNA helicase involved in mRNA processing and antiviral innate immunity. Pre-mRNA processing factor involved in disassembly of spliceosomes after the release of mature mRNA. In cooperation with TFIP11 seem to be involved in the transition of the U2, U5 and U6 snRNP-containing IL complex to the snRNP-free IS complex leading to efficient debranching and turnover of excised introns. Plays a key role in antiviral innate immunity by promoting both MAVS-dependent signaling and NLRP6 inflammasome. Acts as an RNA virus sensor: recognizes and binds viral double stranded RNA (dsRNA) and activates the MAVS-dependent signaling to produce interferon-beta and interferon lambda-3 (IFNL3). Involved in intestinal antiviral innate immunity together with NLRP6: recognizes and binds viral dsRNA and promotes activation of the NLRP6 inflammasome in intestinal epithelial cells to restrict infection by enteric viruses. The NLRP6 inflammasome acts by promoting maturation and secretion of IL18 in the extracellular milieu. Also involved in antibacterial innate immunity by promoting Wnt-induced antimicrobial protein expression in Paneth cells. The polypeptide is ATP-dependent RNA helicase DHX15 (Homo sapiens (Human)).